A 553-amino-acid chain; its full sequence is Capsid protein VP1 (553 aa).

Belongs to the microviridae F protein family.

Its subcellular location is the virion. It localises to the host cytoplasm. In terms of biological role, assembles to form an icosahedral capsid with a T=1 symmetry. In Spiroplasma virus 4 (SpV4), this protein is Capsid protein VP1.